The sequence spans 37 residues: Large ribosomal subunit protein bL36 (37 aa).

The protein belongs to the bacterial ribosomal protein bL36 family.

The sequence is that of Large ribosomal subunit protein bL36 (rpmJ) from Fusobacterium nucleatum subsp. nucleatum (strain ATCC 25586 / DSM 15643 / BCRC 10681 / CIP 101130 / JCM 8532 / KCTC 2640 / LMG 13131 / VPI 4355).